We begin with the raw amino-acid sequence, 3004 residues long: Guanylate cyclase beta (3004 aa).

Topologically, residues Met1–Leu66 are cytoplasmic. A helical transmembrane segment spans residues Ile67–Ile87. The Extracellular segment spans residues Ser88–Lys94. Residues Tyr95–Glu115 form a helical membrane-spanning segment. The Cytoplasmic segment spans residues Ser116–Val300. A helical membrane pass occupies residues Tyr301–Phe321. At Tyr322 to Thr334 the chain is on the extracellular side. Asn332 carries an N-linked (GlcNAc...) asparagine glycan. Residues Phe335–Tyr355 form a helical membrane-spanning segment. Over Ser356–Arg991 the chain is Cytoplasmic. A helical transmembrane segment spans residues Ala992 to Phe1012. Over Asp1013–Ser1022 the chain is Extracellular. A helical membrane pass occupies residues Ser1023 to Ala1043. The Cytoplasmic portion of the chain corresponds to Ser1044 to Asn1072. A helical transmembrane segment spans residues Thr1073–Leu1093. Residues Arg1094–Lys1105 are Extracellular-facing. The helical transmembrane segment at Phe1106–Ser1126 threads the bilayer. Topologically, residues Lys1127–His1130 are cytoplasmic. A helical membrane pass occupies residues Ile1131–Tyr1151. The Extracellular segment spans residues Thr1152–Asp1171. A helical transmembrane segment spans residues Ser1172 to Met1192. The Cytoplasmic segment spans residues Lys1193–Arg1297. The chain crosses the membrane as a helical span at residues Ile1298–Ser1318. At Lys1319–Ser1327 the chain is on the extracellular side. The helical transmembrane segment at Leu1328–Ile1348 threads the bilayer. The Cytoplasmic portion of the chain corresponds to Arg1349 to Asn1353. A helical membrane pass occupies residues Tyr1354 to Ser1374. Residues Glu1375–Tyr1394 are Extracellular-facing. The helical transmembrane segment at Ile1395 to Ile1415 threads the bilayer. Residues Ala1416 to Gln1457 lie on the Cytoplasmic side of the membrane. A helical membrane pass occupies residues Ile1458–Tyr1478. Residues Glu1479–Gln1500 lie on the Extracellular side of the membrane. A helical membrane pass occupies residues Ile1501–Pro1521. Over Lys1522–Lys2563 the chain is Cytoplasmic. The 156-residue stretch at Ser1541 to Lys1696 folds into the Guanylate cyclase 1 domain. A compositionally biased stretch (polar residues) spans Thr2463 to Thr2476. Residues Thr2463 to Lys2491 form a disordered region. Basic and acidic residues predominate over residues Asp2477–Asp2488. The chain crosses the membrane as a helical span at residues Leu2564–Ser2584. Over Tyr2585–Asp2594 the chain is Extracellular. Residues Phe2595 to Leu2615 form a helical membrane-spanning segment. The Cytoplasmic portion of the chain corresponds to Leu2616–Thr2634. The chain crosses the membrane as a helical span at residues Thr2635–Ile2655. Residues His2656–Arg2667 are Extracellular-facing. The chain crosses the membrane as a helical span at residues Ser2668–Lys2688. Residues Asn2689 to Lys2695 lie on the Cytoplasmic side of the membrane. Residues Phe2696 to Ile2716 form a helical membrane-spanning segment. At His2717–Arg2722 the chain is on the extracellular side. The chain crosses the membrane as a helical span at residues Ile2723–Tyr2743. The Cytoplasmic portion of the chain corresponds to Leu2744 to Gly3004. The region spanning Ala2793–Glu2927 is the Guanylate cyclase 2 domain. The Mg(2+) site is built by Asp2798, Ile2799, and Asp2842.

The protein in the N-terminal section; belongs to the cation transport ATPase (P-type) (TC 3.A.3) family. Type IV subfamily. In the C-terminal section; belongs to the adenylyl cyclase class-4/guanylyl cyclase family. Mg(2+) serves as cofactor. The cofactor is Mn(2+).

Its subcellular location is the membrane. The catalysed reaction is GTP = 3',5'-cyclic GMP + diphosphate. Catalyzes the synthesis of the second messenger cGMP from GTP. Probably by regulating cGMP production, required for ookinete gliding motility, which is necessary for the ookinete to traverse the midgut epithelium of the mosquito. This is Guanylate cyclase beta from Plasmodium berghei (strain Anka).